The sequence spans 212 residues: Stromal cell-derived factor 2-like protein (212 aa).

The signal sequence occupies residues 1 to 19; sequence MKSLFLILILCITIPLIFA. Asn20 carries N-linked (GlcNAc...) asparagine glycosylation. 3 MIR domains span residues 29–86, 94–149, and 151–206; these read ITKV…IKGP, GTVV…VETE, and GKEW…TEEG.

The protein resides in the secreted. This Dictyostelium discoideum (Social amoeba) protein is Stromal cell-derived factor 2-like protein.